The primary structure comprises 264 residues: Thiazole synthase (264 aa).

The Schiff-base intermediate with DXP role is filled by lysine 106. 1-deoxy-D-xylulose 5-phosphate-binding positions include glycine 167, 193–194, and 215–216; these read AG and NT.

It belongs to the ThiG family. As to quaternary structure, homotetramer. Forms heterodimers with either ThiH or ThiS.

The protein localises to the cytoplasm. The enzyme catalyses [ThiS sulfur-carrier protein]-C-terminal-Gly-aminoethanethioate + 2-iminoacetate + 1-deoxy-D-xylulose 5-phosphate = [ThiS sulfur-carrier protein]-C-terminal Gly-Gly + 2-[(2R,5Z)-2-carboxy-4-methylthiazol-5(2H)-ylidene]ethyl phosphate + 2 H2O + H(+). It participates in cofactor biosynthesis; thiamine diphosphate biosynthesis. Catalyzes the rearrangement of 1-deoxy-D-xylulose 5-phosphate (DXP) to produce the thiazole phosphate moiety of thiamine. Sulfur is provided by the thiocarboxylate moiety of the carrier protein ThiS. In vitro, sulfur can be provided by H(2)S. The polypeptide is Thiazole synthase (Xylella fastidiosa (strain Temecula1 / ATCC 700964)).